The primary structure comprises 1136 residues: Probable RNA-dependent RNA polymerase 2 (1136 aa).

The interval serine 965–proline 989 is disordered. Positions aspartate 967–proline 980 are enriched in low complexity.

Belongs to the RdRP family.

It carries out the reaction RNA(n) + a ribonucleoside 5'-triphosphate = RNA(n+1) + diphosphate. Its function is as follows. Probably involved in the RNA silencing pathway and required for the generation of small interfering RNAs (siRNAs). This chain is Probable RNA-dependent RNA polymerase 2 (RDR2), found in Oryza sativa subsp. japonica (Rice).